The sequence spans 69 residues: Sec-independent protein translocase protein TatA (69 aa).

A helical membrane pass occupies residues M1–G21. The tract at residues K41 to K69 is disordered. Basic and acidic residues predominate over residues T60–K69.

This sequence belongs to the TatA/E family. In terms of assembly, the Tat system comprises two distinct complexes: a TatABC complex, containing multiple copies of TatA, TatB and TatC subunits, and a separate TatA complex, containing only TatA subunits. Substrates initially bind to the TatABC complex, which probably triggers association of the separate TatA complex to form the active translocon.

Its subcellular location is the cell inner membrane. Its function is as follows. Part of the twin-arginine translocation (Tat) system that transports large folded proteins containing a characteristic twin-arginine motif in their signal peptide across membranes. TatA could form the protein-conducting channel of the Tat system. This chain is Sec-independent protein translocase protein TatA, found in Rhizobium rhizogenes (strain K84 / ATCC BAA-868) (Agrobacterium radiobacter).